The primary structure comprises 224 residues: Oxalate oxidase 2 (224 aa).

A signal peptide spans methionine 1–alanine 23. Cysteine 33 and cysteine 49 form a disulfide bridge. In terms of domain architecture, Cupin type-1 spans serine 63–glutamate 214. N-linked (GlcNAc...) asparagine glycans are attached at residues asparagine 70 and asparagine 75. The Mn(2+) site is built by histidine 111, histidine 113, glutamate 118, and histidine 160.

Belongs to the germin family. Oligomer (believed to be a pentamer but probably hexamer). Post-translationally, glycosylated. A form called G contains antennary GlcNAc residues, whereas a form called G' lacks antennary GlcNAc residues in its otherwise identical glycans. In terms of tissue distribution, root.

It localises to the secreted. It is found in the extracellular space. Its subcellular location is the apoplast. The protein localises to the cell wall. The enzyme catalyses oxalate + O2 + 2 H(+) = H2O2 + 2 CO2. Its function is as follows. Releases hydrogen peroxide in the apoplast. May play an important role in several aspects of plant growth and defense mechanisms. This is Oxalate oxidase 2 from Hordeum vulgare (Barley).